The following is a 144-amino-acid chain: Universal stress protein F (144 aa).

This sequence belongs to the universal stress protein A family. As to quaternary structure, homodimer.

In Escherichia coli (strain K12), this protein is Universal stress protein F (uspF).